A 188-amino-acid chain; its full sequence is Elongation factor P (188 aa).

Belongs to the elongation factor P family.

It is found in the cytoplasm. It participates in protein biosynthesis; polypeptide chain elongation. In terms of biological role, involved in peptide bond synthesis. Stimulates efficient translation and peptide-bond synthesis on native or reconstituted 70S ribosomes in vitro. Probably functions indirectly by altering the affinity of the ribosome for aminoacyl-tRNA, thus increasing their reactivity as acceptors for peptidyl transferase. The polypeptide is Elongation factor P (Exiguobacterium sibiricum (strain DSM 17290 / CCUG 55495 / CIP 109462 / JCM 13490 / 255-15)).